The primary structure comprises 432 residues: Endosome-associated-trafficking regulator 1 (432 aa).

Position 18 is a phosphoserine (Ser-18). Residues 126 to 143 (DTTTSRIYPKEASRHPLG) show a composition bias toward basic and acidic residues. Positions 126 to 145 (DTTTSRIYPKEASRHPLGLE) are disordered. Ser-148 is modified (phosphoserine). The interval 174–196 (LEEDEDDGWNITYLPSAVDQTHS) is required for interaction with PTPN13. Residues 226–250 (PPWTLSDTDSRISPASPAGSPNADF) form a disordered region. 2 positions are modified to phosphoserine: Ser-241 and Ser-245. Coiled coils occupy residues 262–289 (LRTL…VQSF) and 315–370 (FHDL…LRSG).

This sequence belongs to the ENTR1 family. In terms of assembly, found in a complex with ENTR1, PTPN13 and GIT1. Interacts with PTPN13 (via the FERM domain). Interacts (via N-terminus) with GIT1 (via N- and C-terminus); this interaction is direct. Interacts with NOD2. Interacts (via N-terminus) with IFT88. Interacts with VPS35. In terms of processing, phosphorylated.

It localises to the cytoplasm. The protein resides in the early endosome. The protein localises to the endosome. Its subcellular location is the recycling endosome. It is found in the midbody. It localises to the cytoskeleton. The protein resides in the microtubule organizing center. The protein localises to the centrosome. Its subcellular location is the cilium basal body. Its function is as follows. May be involved in modulation of TNF response. May be involved in presentation of TNFRSF1A on the cell surface. Involved in the endosome-to-plasma membrane trafficking and recycling of SNX27-retromer-dependent cargo proteins, such as GLUT1. Involved in the regulation of cytokinesis; the function may involve PTPN13 and GIT1. Endosome-associated protein that plays a role in membrane receptor sorting, cytokinesis and ciliogenesis. Involved in the endosome-to-plasma membrane trafficking and recycling of SNX27-retromer-dependent cargo proteins, such as GLUT1. Involved in the regulation of cytokinesis; the function may involve PTPN13 and GIT1. Plays a role in the formation of cilia. Involved in cargo protein localization, such as PKD2, at primary cilia. Involved in the presentation of the tumor necrosis factor (TNF) receptor TNFRSF1A on the cell surface, and hence in the modulation of the TNF-induced apoptosis. The chain is Endosome-associated-trafficking regulator 1 from Mus musculus (Mouse).